A 658-amino-acid chain; its full sequence is Carnitine O-palmitoyltransferase 2, mitochondrial (658 aa).

A mitochondrion-targeting transit peptide spans 1 to 25; the sequence is MVARLLLRSWSRGLAVGPGAPCRPL. Over 26–178 the chain is Mitochondrial matrix; sequence STGFEPSQYL…DLLEPEVFHL (153 aa). N6-succinyllysine is present on K69. At K79 the chain carries N6-acetyllysine. Residue K85 is modified to N6-succinyllysine. An intramembrane region (note=Mitochondrial inner membrane) is located at residues 179-208; it reads NPAKSDTDTFKRFIRFVPSFLSWYGAYLVN. Over 209–658 the chain is Mitochondrial matrix; the sequence is AYPLDMSQYY…DALEGKMIKT (450 aa). The residue at position 239 (K239) is an N6-acetyllysine; alternate. K239 carries the N6-succinyllysine; alternate modification. Catalysis depends on H372, which acts as the Proton acceptor. K418 carries the post-translational modification N6-acetyllysine; alternate. The residue at position 418 (K418) is an N6-succinyllysine; alternate. N6-succinyllysine is present on residues K424 and K439. Residue 452–464 participates in CoA binding; that stretch reads GREFLKKQKLSPD. (R)-carnitine contacts are provided by Y486, S488, and T499. K510 carries the N6-acetyllysine; alternate modification. At K510 the chain carries N6-succinyllysine; alternate.

The protein belongs to the carnitine/choline acetyltransferase family.

The protein resides in the mitochondrion inner membrane. The catalysed reaction is (R)-carnitine + hexadecanoyl-CoA = O-hexadecanoyl-(R)-carnitine + CoA. It carries out the reaction octanoyl-CoA + (R)-carnitine = O-octanoyl-(R)-carnitine + CoA. The enzyme catalyses decanoyl-CoA + (R)-carnitine = O-decanoyl-(R)-carnitine + CoA. It catalyses the reaction dodecanoyl-CoA + (R)-carnitine = O-dodecanoyl-R-carnitine + CoA. The catalysed reaction is tetradecanoyl-CoA + (R)-carnitine = O-tetradecanoyl-(R)-carnitine + CoA. It carries out the reaction (R)-carnitine + octadecanoyl-CoA = O-octadecanoyl-(R)-carnitine + CoA. The enzyme catalyses eicosanoyl-CoA + (R)-carnitine = O-eicosanoyl-(R)-carnitine + CoA. It catalyses the reaction (9Z)-tetradecenoyl-CoA + (R)-carnitine = O-(9Z)-tetradecenoyl-(R)-carnitine + CoA. The catalysed reaction is (5Z)-tetradecenoyl-CoA + (R)-carnitine = O-(5Z)-tetradecenoyl-(R)-carnitine + CoA. It carries out the reaction (R)-carnitine + (9Z)-octadecenoyl-CoA = O-(9Z)-octadecenoyl-(R)-carnitine + CoA. The enzyme catalyses 4,8-dimethylnonanoyl-CoA + (R)-carnitine = O-4,8-dimethylnonanoyl-(R)-carnitine + CoA. It functions in the pathway lipid metabolism; fatty acid beta-oxidation. In terms of biological role, involved in the intramitochondrial synthesis of acylcarnitines from accumulated acyl-CoA metabolites. Reconverts acylcarnitines back into the respective acyl-CoA esters that can then undergo beta-oxidation, an essential step for the mitochondrial uptake of long-chain fatty acids and their subsequent beta-oxidation in the mitochondrion. Active with medium (C8-C12) and long-chain (C14-C18) acyl-CoA esters. The polypeptide is Carnitine O-palmitoyltransferase 2, mitochondrial (CPT2) (Bos taurus (Bovine)).